Consider the following 89-residue polypeptide: MTIKLINIGFGNIISANRMISIVSPESAPIKRMIQDARDRGMLIDATYGRRTRAVVVMDSDHIILSAVQPETVAHRLSVKEEIMDEGQG.

This sequence belongs to the RemA family.

This Bacillus velezensis (strain DSM 23117 / BGSC 10A6 / LMG 26770 / FZB42) (Bacillus amyloliquefaciens subsp. plantarum) protein is Putative regulatory protein RBAM_015500.